The following is a 314-amino-acid chain: Aspartate carbamoyltransferase catalytic subunit (314 aa).

Residues Arg55 and Thr56 each coordinate carbamoyl phosphate. Lys83 provides a ligand contact to L-aspartate. Residues Arg105, His134, and Gln137 each coordinate carbamoyl phosphate. L-aspartate contacts are provided by Arg167 and Arg221. Carbamoyl phosphate is bound by residues Gly262 and Pro263.

This sequence belongs to the aspartate/ornithine carbamoyltransferase superfamily. ATCase family. As to quaternary structure, heterododecamer (2C3:3R2) of six catalytic PyrB chains organized as two trimers (C3), and six regulatory PyrI chains organized as three dimers (R2).

The enzyme catalyses carbamoyl phosphate + L-aspartate = N-carbamoyl-L-aspartate + phosphate + H(+). The protein operates within pyrimidine metabolism; UMP biosynthesis via de novo pathway; (S)-dihydroorotate from bicarbonate: step 2/3. Functionally, catalyzes the condensation of carbamoyl phosphate and aspartate to form carbamoyl aspartate and inorganic phosphate, the committed step in the de novo pyrimidine nucleotide biosynthesis pathway. This Corynebacterium urealyticum (strain ATCC 43042 / DSM 7109) protein is Aspartate carbamoyltransferase catalytic subunit.